Reading from the N-terminus, the 294-residue chain is tRNA-uridine aminocarboxypropyltransferase 1 (294 aa).

Residues 158–185 (DMQNDSSCEPSLKRPKCSQQYDKSKNEG) form a disordered region. The short motif at 202–205 (DSTW) is the DXTW element.

Belongs to the TDD superfamily. DTWD1 family.

The protein localises to the nucleus. It carries out the reaction a uridine in tRNA + S-adenosyl-L-methionine = a 3-[(3S)-3-amino-3-carboxypropyl]uridine in tRNA + S-methyl-5'-thioadenosine + H(+). Catalyzes the formation of 3-(3-amino-3-carboxypropyl)uridine (acp3U) at position 20 in the D-loop of several cytoplasmic tRNAs (acp3U(20)). The protein is tRNA-uridine aminocarboxypropyltransferase 1 of Xenopus tropicalis (Western clawed frog).